The primary structure comprises 264 residues: Na(+)-translocating NADH-quinone reductase subunit E (264 aa).

The next 6 helical transmembrane spans lie at 11 to 31, 50 to 70, 90 to 110, 123 to 143, 149 to 169, and 189 to 209; these read VFGIFLQATFIQNILLSNFLG, MSVALVLTVTGSINWVVHTFI, FLELIIFIVVIAAFTQILELL, GIFLPLIAVNCAILGGVLFGI, FIPMMIFSLGAGCGWWLAIVL, and MGISFITTGLIAMAFMSLTGI.

This sequence belongs to the NqrDE/RnfAE family. Composed of six subunits; NqrA, NqrB, NqrC, NqrD, NqrE and NqrF.

It is found in the cell inner membrane. It catalyses the reaction a ubiquinone + n Na(+)(in) + NADH + H(+) = a ubiquinol + n Na(+)(out) + NAD(+). Its function is as follows. NQR complex catalyzes the reduction of ubiquinone-1 to ubiquinol by two successive reactions, coupled with the transport of Na(+) ions from the cytoplasm to the periplasm. NqrA to NqrE are probably involved in the second step, the conversion of ubisemiquinone to ubiquinol. The protein is Na(+)-translocating NADH-quinone reductase subunit E of Chlamydia caviae (strain ATCC VR-813 / DSM 19441 / 03DC25 / GPIC) (Chlamydophila caviae).